Here is a 137-residue protein sequence, read N- to C-terminus: Peptide methionine sulfoxide reductase MsrB (137 aa).

A MsrB domain is found at 7 to 129 (AEELKKNLSE…NSASLRFTDG (123 aa)). Cys-46, Cys-49, Cys-95, and Cys-98 together coordinate Zn(2+). The active-site Nucleophile is the Cys-118.

This sequence belongs to the MsrB Met sulfoxide reductase family. Zn(2+) is required as a cofactor.

The enzyme catalyses L-methionyl-[protein] + [thioredoxin]-disulfide + H2O = L-methionyl-(R)-S-oxide-[protein] + [thioredoxin]-dithiol. This is Peptide methionine sulfoxide reductase MsrB from Escherichia coli (strain K12 / MC4100 / BW2952).